A 329-amino-acid polypeptide reads, in one-letter code: GTP 3',8-cyclase (329 aa).

The Radical SAM core domain maps to 8 to 234 (AFARKFYYLR…QLRQRSDGPA (227 aa)). GTP is bound at residue arginine 17. 2 residues coordinate [4Fe-4S] cluster: cysteine 24 and cysteine 28. Tyrosine 30 lines the S-adenosyl-L-methionine pocket. Cysteine 31 contacts [4Fe-4S] cluster. Arginine 68 is a GTP binding site. Residue glycine 72 coordinates S-adenosyl-L-methionine. Threonine 99 serves as a coordination point for GTP. S-adenosyl-L-methionine is bound at residue serine 123. Residue lysine 160 coordinates GTP. S-adenosyl-L-methionine is bound at residue methionine 194. 2 residues coordinate [4Fe-4S] cluster: cysteine 257 and cysteine 260. 262–264 (RLR) serves as a coordination point for GTP. Position 274 (cysteine 274) interacts with [4Fe-4S] cluster.

Belongs to the radical SAM superfamily. MoaA family. In terms of assembly, monomer and homodimer. [4Fe-4S] cluster is required as a cofactor.

It carries out the reaction GTP + AH2 + S-adenosyl-L-methionine = (8S)-3',8-cyclo-7,8-dihydroguanosine 5'-triphosphate + 5'-deoxyadenosine + L-methionine + A + H(+). It participates in cofactor biosynthesis; molybdopterin biosynthesis. Functionally, catalyzes the cyclization of GTP to (8S)-3',8-cyclo-7,8-dihydroguanosine 5'-triphosphate. This chain is GTP 3',8-cyclase, found in Escherichia fergusonii (strain ATCC 35469 / DSM 13698 / CCUG 18766 / IAM 14443 / JCM 21226 / LMG 7866 / NBRC 102419 / NCTC 12128 / CDC 0568-73).